We begin with the raw amino-acid sequence, 344 residues long: L-rhamnose-proton symporter (344 aa).

10 helical membrane passes run alanine 4–alanine 24, tryptophan 38–leucine 58, phenylalanine 68–isoleucine 88, methionine 101–isoleucine 121, threonine 137–leucine 157, leucine 175–alanine 195, leucine 214–isoleucine 234, isoleucine 259–glycine 279, methionine 290–leucine 310, and valine 321–glycine 341.

Belongs to the L-rhamnose transporter (TC 2.A.7.6) family.

It localises to the cell inner membrane. The catalysed reaction is L-rhamnopyranose(in) + H(+)(in) = L-rhamnopyranose(out) + H(+)(out). Uptake of L-rhamnose across the cytoplasmic membrane with the concomitant transport of protons into the cell (symport system). The sequence is that of L-rhamnose-proton symporter from Salmonella dublin (strain CT_02021853).